A 441-amino-acid chain; its full sequence is Ribulose bisphosphate carboxylase large chain (441 aa).

Substrate contacts are provided by N89 and T139. Catalysis depends on K141, which acts as the Proton acceptor. Substrate is bound at residue K143. Positions 167, 169, and 170 each coordinate Mg(2+). K167 carries the post-translational modification N6-carboxylysine. H260 serves as the catalytic Proton acceptor. R261, H293, and S345 together coordinate substrate.

Belongs to the RuBisCO large chain family. Type I subfamily. Heterohexadecamer of 8 large chains and 8 small chains; disulfide-linked. The disulfide link is formed within the large subunit homodimers. Requires Mg(2+) as cofactor. The disulfide bond which can form in the large chain dimeric partners within the hexadecamer appears to be associated with oxidative stress and protein turnover.

Its subcellular location is the plastid. It localises to the chloroplast. The enzyme catalyses 2 (2R)-3-phosphoglycerate + 2 H(+) = D-ribulose 1,5-bisphosphate + CO2 + H2O. The catalysed reaction is D-ribulose 1,5-bisphosphate + O2 = 2-phosphoglycolate + (2R)-3-phosphoglycerate + 2 H(+). Functionally, ruBisCO catalyzes two reactions: the carboxylation of D-ribulose 1,5-bisphosphate, the primary event in carbon dioxide fixation, as well as the oxidative fragmentation of the pentose substrate in the photorespiration process. Both reactions occur simultaneously and in competition at the same active site. The protein is Ribulose bisphosphate carboxylase large chain of Symphoricarpos albus (Common snowberry).